The following is a 302-amino-acid chain: tRNA pseudouridine synthase B (302 aa).

Aspartate 47 acts as the Nucleophile in catalysis.

The protein belongs to the pseudouridine synthase TruB family. Type 1 subfamily.

It catalyses the reaction uridine(55) in tRNA = pseudouridine(55) in tRNA. Functionally, responsible for synthesis of pseudouridine from uracil-55 in the psi GC loop of transfer RNAs. The polypeptide is tRNA pseudouridine synthase B (Ruegeria sp. (strain TM1040) (Silicibacter sp.)).